The chain runs to 1010 residues: PHD finger protein 20 (1010 aa).

2 Tudor domains span residues 4 to 69 and 83 to 147; these read HPPN…RPLE and GSSE…GNAR. 2 disordered regions span residues 142-373 and 483-609; these read IVGN…EGQL and EKSP…GKLK. Residues 147–246 show a composition bias toward basic and acidic residues; the sequence is RPKETDHKSL…VEKKPEKDLV (100 aa). Ser159 carries the post-translational modification Phosphoserine. The a.T hook DNA-binding region spans 257–269; it reads KRKRGRPPSITPT. Residues 267 to 280 show a composition bias toward polar residues; that stretch reads TPTAVDSNSQTLQP. Composition is skewed to basic and acidic residues over residues 292-325, 483-493, and 525-541; these read KRSDTPLKRPRLDKNSPQEQSKKRSENSDKDLSR, EKSPEPEEGPG, and AKEKEKTKEKKFKELVR. The C2H2-type zinc-finger motif lies at 455–485; that stretch reads FRCKVLDCLKFFRKAKLLHYHMKYFHGMEKS. Residues 542–554 are compositionally biased toward basic residues; it reads VKPKKKKKKKKKT. A PHD-type zinc finger spans residues 657–703; sequence RCICEVQEENDFMIQCEECQCWQHGVCMGLLEENVPEKYTCYVCQDP. Residues 804-827 are disordered; it reads RSEESPSYRTLNGAVEKPSPLPRS. Position 841 is an N6-acetyllysine (Lys841). Residues Ser876 and Ser878 each carry the phosphoserine modification. The interval 877–902 is disordered; it reads LSPRLGWPIDQDRSRGDIDPKPSSPK. The span at 886–902 shows a compositional bias: basic and acidic residues; the sequence is DQDRSRGDIDPKPSSPK.

In terms of assembly, homodimer; disulfide-linked. Component of some MLL1/MLL complex, at least composed of the core components KMT2A/MLL1, ASH2L, HCFC1, WDR5 and RBBP5, as well as the facultative components BACC1, CHD8, E2F6, HSP70, INO80C, KANSL1, LAS1L, MAX, MCRS1, MGA, MYST1/MOF, PELP1, PHF20, PRP31, RING2, RUVB1/TIP49A, RUVB2/TIP49B, SENP3, TAF1, TAF4, TAF6, TAF7, TAF9 and TEX10. Component of the NSL complex at least composed of MOF/KAT8, KANSL1, KANSL2, KANSL3, MCRS1, PHF20, OGT1/OGT, WDR5 and HCFC1. In terms of processing, ubiquitinated by TRIM26; leading to proteasomal degradation.

The protein localises to the nucleus. Its function is as follows. Contributes to methyllysine-dependent p53/TP53 stabilization and up-regulation after DNA damage. Methyllysine-binding protein, component of the MOF histone acetyltransferase protein complex. Not required for maintaining the global histone H4 'Lys-16' acetylation (H4K16ac) levels or locus specific histone acetylation, but instead works downstream in transcriptional regulation of MOF target genes. As part of the NSL complex it may be involved in acetylation of nucleosomal histone H4 on several lysine residues. This Mus musculus (Mouse) protein is PHD finger protein 20 (Phf20).